We begin with the raw amino-acid sequence, 288 residues long: Bifunctional protein FolD (288 aa).

Residues 164-166 (GRS) and valine 230 contribute to the NADP(+) site.

It belongs to the tetrahydrofolate dehydrogenase/cyclohydrolase family. In terms of assembly, homodimer.

It carries out the reaction (6R)-5,10-methylene-5,6,7,8-tetrahydrofolate + NADP(+) = (6R)-5,10-methenyltetrahydrofolate + NADPH. It catalyses the reaction (6R)-5,10-methenyltetrahydrofolate + H2O = (6R)-10-formyltetrahydrofolate + H(+). The protein operates within one-carbon metabolism; tetrahydrofolate interconversion. Functionally, catalyzes the oxidation of 5,10-methylenetetrahydrofolate to 5,10-methenyltetrahydrofolate and then the hydrolysis of 5,10-methenyltetrahydrofolate to 10-formyltetrahydrofolate. This is Bifunctional protein FolD from Thermomicrobium roseum (strain ATCC 27502 / DSM 5159 / P-2).